The following is a 337-amino-acid chain: Lipoyl synthase (337 aa).

The [4Fe-4S] cluster site is built by Cys81, Cys86, Cys92, Cys107, Cys111, Cys114, and Ser323. The Radical SAM core domain occupies 93 to 312; the sequence is FSHGTATFMI…EDYGNALGFS (220 aa).

The protein belongs to the radical SAM superfamily. Lipoyl synthase family. Requires [4Fe-4S] cluster as cofactor.

It localises to the cytoplasm. The catalysed reaction is [[Fe-S] cluster scaffold protein carrying a second [4Fe-4S](2+) cluster] + N(6)-octanoyl-L-lysyl-[protein] + 2 oxidized [2Fe-2S]-[ferredoxin] + 2 S-adenosyl-L-methionine + 4 H(+) = [[Fe-S] cluster scaffold protein] + N(6)-[(R)-dihydrolipoyl]-L-lysyl-[protein] + 4 Fe(3+) + 2 hydrogen sulfide + 2 5'-deoxyadenosine + 2 L-methionine + 2 reduced [2Fe-2S]-[ferredoxin]. It participates in protein modification; protein lipoylation via endogenous pathway; protein N(6)-(lipoyl)lysine from octanoyl-[acyl-carrier-protein]: step 2/2. Functionally, catalyzes the radical-mediated insertion of two sulfur atoms into the C-6 and C-8 positions of the octanoyl moiety bound to the lipoyl domains of lipoate-dependent enzymes, thereby converting the octanoylated domains into lipoylated derivatives. In Xanthomonas euvesicatoria pv. vesicatoria (strain 85-10) (Xanthomonas campestris pv. vesicatoria), this protein is Lipoyl synthase.